The primary structure comprises 229 residues: Peptidase E (229 aa).

Active-site charge relay system residues include serine 120, aspartate 135, and histidine 157.

The protein belongs to the peptidase S51 family.

It localises to the cytoplasm. The catalysed reaction is Dipeptidase E catalyzes the hydrolysis of dipeptides Asp-|-Xaa. It does not act on peptides with N-terminal Glu, Asn or Gln, nor does it cleave isoaspartyl peptides.. Its function is as follows. Hydrolyzes dipeptides containing N-terminal aspartate residues. May play a role in allowing the cell to use peptide aspartate to spare carbon otherwise required for the synthesis of the aspartate family of amino acids. The sequence is that of Peptidase E (pepE) from Salmonella typhimurium (strain LT2 / SGSC1412 / ATCC 700720).